The sequence spans 169 residues: Heat shock protein beta-7 (169 aa).

The interval 1–37 (MSHRTSSAFRAERSFRSSSSSSSSSSSSASRALPAQD) is disordered. The interval 1–70 (MSHRTSSAFR…PLAFPARPGG (70 aa)) is required for localization to SC35 splicing speckles. Over residues 16–32 (RSSSSSSSSSSSSASRA) the composition is skewed to low complexity. The region spanning 61–169 (PLAFPARPGG…QQTFRTEIKI (109 aa)) is the sHSP domain.

This sequence belongs to the small heat shock protein (HSP20) family. In terms of assembly, interacts with C-terminal domain of actin-binding protein 280. Found in both cardiac and slow skeletal (soleus) muscle.

It localises to the cytoplasm. Its subcellular location is the nucleus. The protein localises to the cajal body. In Mus musculus (Mouse), this protein is Heat shock protein beta-7 (Hspb7).